The chain runs to 575 residues: Septation ring formation regulator EzrA (575 aa).

Residues 1–8 lie on the Extracellular side of the membrane; it reads MSNGQLIY. Residues 9–27 traverse the membrane as a helical segment; that stretch reads LMVAIAVILVLAYVVAIFL. The Cytoplasmic segment spans residues 28-575; sequence RKRNEGRLEA…YEKTRETIRF (548 aa). 4 coiled-coil regions span residues 105-191, 265-301, 354-416, and 456-526; these read LKAS…FVTL, LYEA…LYDI, VRRI…IEKD, and TASN…IQEA.

This sequence belongs to the EzrA family.

Its subcellular location is the cell membrane. Its function is as follows. Negative regulator of FtsZ ring formation; modulates the frequency and position of FtsZ ring formation. Inhibits FtsZ ring formation at polar sites. Interacts either with FtsZ or with one of its binding partners to promote depolymerization. In Streptococcus pneumoniae serotype 4 (strain ATCC BAA-334 / TIGR4), this protein is Septation ring formation regulator EzrA.